Here is a 130-residue protein sequence, read N- to C-terminus: Histone H2A type 1 (130 aa).

Residues 1–22 (MSGRGKQGGKTRAKAKTRSSRA) are disordered. N-acetylserine is present on serine 2. Residue serine 2 is modified to Phosphoserine. Lysine 6 is subject to N6-(2-hydroxyisobutyryl)lysine. N6-acetyllysine is present on lysine 6. Basic residues predominate over residues 7–19 (QGGKTRAKAKTRS). Lysine 10 is subject to N6-(2-hydroxyisobutyryl)lysine; alternate. An N6-lactoyllysine; alternate modification is found at lysine 10. At lysine 10 the chain carries N6-succinyllysine. Residues lysine 14 and lysine 16 each participate in a glycyl lysine isopeptide (Lys-Gly) (interchain with G-Cter in ubiquitin) cross-link. Position 37 is an N6-(2-hydroxyisobutyryl)lysine; alternate (lysine 37). N6-(2-hydroxyisobutyryl)lysine is present on residues lysine 75 and lysine 76. Residue lysine 96 is modified to N6-(2-hydroxyisobutyryl)lysine; alternate. The residue at position 96 (lysine 96) is an N6-succinyllysine. N6-glutaryllysine; alternate is present on lysine 96. At glutamine 105 the chain carries N5-methylglutamine. At lysine 119 the chain carries N6-(2-hydroxyisobutyryl)lysine; alternate. An N6-glutaryllysine; alternate modification is found at lysine 119. Lysine 120 participates in a covalent cross-link: Glycyl lysine isopeptide (Lys-Gly) (interchain with G-Cter in ubiquitin).

Belongs to the histone H2A family. In terms of assembly, the nucleosome is a histone octamer containing two molecules each of H2A, H2B, H3 and H4 assembled in one H3-H4 heterotetramer and two H2A-H2B heterodimers. The octamer wraps approximately 147 bp of DNA. Post-translationally, monoubiquitination of Lys-120 (H2AK119Ub) gives a specific tag for epigenetic transcriptional repression. Following DNA double-strand breaks (DSBs), it is ubiquitinated through 'Lys-63' linkage of ubiquitin moieties, leading to the recruitment of repair proteins to sites of DNA damage. H2AK119Ub and ionizing radiation-induced 'Lys-63'-linked ubiquitination are distinct events. Phosphorylation on Ser-2 is enhanced during mitosis. Phosphorylation on Ser-2 directly represses transcription. In terms of processing, glutamine methylation at Gln-105 (H2AQ104me) by FBL is specifically dedicated to polymerase I. It is present at 35S ribosomal DNA locus and impairs binding of the FACT complex.

Its subcellular location is the nucleus. The protein resides in the chromosome. Its function is as follows. Core component of nucleosome. Nucleosomes wrap and compact DNA into chromatin, limiting DNA accessibility to the cellular machineries which require DNA as a template. Histones thereby play a central role in transcription regulation, DNA repair, DNA replication and chromosomal stability. DNA accessibility is regulated via a complex set of post-translational modifications of histones, also called histone code, and nucleosome remodeling. The protein is Histone H2A type 1 of Xenopus laevis (African clawed frog).